We begin with the raw amino-acid sequence, 360 residues long: C-X-C chemokine receptor type 2 (360 aa).

At 1–48 (MEDFNMESDSFEDFWKGEDLSNYSYSSTLPPFLLDAAPCEPESLEINK) the chain is on the extracellular side. Asparagine 22 carries an N-linked (GlcNAc...) asparagine glycan. A helical transmembrane segment spans residues 49–75 (YFVVIIYALVFLLSLLGNSLVMLVILY). Residues 76 to 84 (SRVGRSVTD) are Cytoplasmic-facing. Residues 85-105 (VYLLNLALADLLFALTLPIWA) form a helical membrane-spanning segment. At 106–120 (ASKVNGWIFGTFLCK) the chain is on the extracellular side. Cysteine 119 and cysteine 196 are oxidised to a cystine. The chain crosses the membrane as a helical span at residues 121-142 (VVSLLKEVNFYSGILLLACISV). At 143–163 (DRYLAIVHATRTLTQKRYLVK) the chain is on the cytoplasmic side. The helical transmembrane segment at 164–183 (FICLSIWGLSLLLALPVLLF) threads the bilayer. The Extracellular portion of the chain corresponds to 184 to 208 (RRTVYSSNVSPACYEDMGNNTANWR). A helical transmembrane segment spans residues 209 to 231 (MLLRILPQSFGFIVPLLIMLFCY). The Cytoplasmic segment spans residues 232 to 251 (GFTLRTLFKAHMGQKHRAMR). The chain crosses the membrane as a helical span at residues 252–273 (VIFAVVLIFLLCWLPYNLVLLA). At 274-294 (DTLMRTQVIQETCERRNHIDR) the chain is on the extracellular side. A helical transmembrane segment spans residues 295-315 (ALDATEILGILHSCLNPLIYA). Topologically, residues 316 to 360 (FIGQKFRHGLLKILAIHGLISKDSLPKDSRPSFVGSSSGHTSTTL) are cytoplasmic. 4 positions are modified to phosphoserine: serine 347, serine 351, serine 352, and serine 353.

It belongs to the G-protein coupled receptor 1 family. Interacts with IL8. Interacts with GNAI2. Post-translationally, phosphorylated upon ligand binding; which is required for desensitization. (Microbial infection) Proteolytically cleaved by Staphylococcus aureus staphopain A/SspP. This cleavage inhibits CXCR2-dependent neutrophil activation and chemotaxis.

It is found in the cell membrane. In terms of biological role, receptor for interleukin-8 which is a powerful neutrophil chemotactic factor. Binding of IL-8 to the receptor causes activation of neutrophils. This response is mediated via a G-protein that activates a phosphatidylinositol-calcium second messenger system. Binds to IL-8 with high affinity. Also binds with high affinity to CXCL3, GRO/MGSA and NAP-2. This chain is C-X-C chemokine receptor type 2 (CXCR2), found in Homo sapiens (Human).